The following is a 513-amino-acid chain: Maturase K (513 aa).

The protein belongs to the intron maturase 2 family. MatK subfamily.

It localises to the plastid. It is found in the chloroplast. Functionally, usually encoded in the trnK tRNA gene intron. Probably assists in splicing its own and other chloroplast group II introns. This Byblis liniflora (Carnivorous plant) protein is Maturase K.